Consider the following 2496-residue polypeptide: Hornerin (2496 aa).

Positions 1 to 81 (MPKLLESIVT…TEYLLMILKL (81 aa)) are S-100-like. EF-hand domains lie at 13 to 48 (DVFY…LKNP) and 49 to 84 (DDPD…LTKA). Ca(2+) is bound by residues M27, E32, D62, D64, N66, K68, and E73. The tract at residues 82-98 (TKACNKIIGKDYCQASG) is s (spacer). Residues 97-2496 (SGSKQKNHSH…SGQTSGCGSG (2400 aa)) are disordered. The stretch at 99 to 145 (SKQKNHSHQHQEEQSKKETENKEQKGSISSSAGENDSYSRGSRGSNK) is one 1; truncated repeat. The segment covering 107 to 123 (QHQEEQSKKETENKEQK) has biased composition (basic and acidic residues). Residues 124-134 (GSISSSAGEND) show a composition bias toward polar residues. Residues 144–153 (NKSKSKKLRK) are compositionally biased toward basic residues. A run of 27 repeats spans residues 146–231 (SKSK…NGKH), 232–321 (GSSS…FGSS), 326–400 (SGQS…SEQY), 401–491 (GASS…SCCG), 492–577 (QSSG…SGRY), 578–668 (GASS…SGSR), 669–748 (HGSG…SGRC), 749–839 (GASS…SCCG), 840–926 (QSSG…SGRY), 927–1017 (GASS…SGSR), 1018–1097 (HGSG…SGRC), 1098–1188 (GASS…SCCG), 1189–1274 (QSSG…SGRY), 1275–1365 (GASS…SGSR), 1366–1445 (HGSG…SGRC), 1446–1536 (GASS…SCCG), 1537–1622 (QSSG…SGRY), 1623–1713 (GASS…SGSR), 1714–1793 (HGSG…SGRC), 1794–1884 (GASS…SCCG), 1885–1970 (QSSG…SGRY), 1971–2061 (GASS…SGSR), 2062–2141 (HGSG…SGRC), 2142–2232 (GASS…SGSR), 2233–2312 (HGSG…SGRY), 2313–2403 (GASS…SGSR), and 2410–2496 (QFPI…CGSG). Low complexity-rich tracts occupy residues 183-194 (SGFSNSSGNGRP), 200-246 (SGFP…SGHS), and 270-286 (RESS…SEEP). Polar residues-rich tracts occupy residues 294–319 (RKNS…QGFG) and 326–355 (SGQS…SSES). Low complexity-rich tracts occupy residues 362-379 (VSGS…STSG), 394-415 (SSGS…SGQS), and 423-448 (SGSR…QQFG). Residues 449 to 464 (SGSGRSSGFSQGGSGQ) show a composition bias toward gly residues. A compositionally biased stretch (low complexity) spans 465 to 565 (GRSSRGGQQG…GQTSSSTRQG (101 aa)). S506 and S508 each carry phosphoserine. A compositionally biased stretch (gly residues) spans 566 to 576 (SGQGQASGSGR). Composition is skewed to low complexity over residues 577-593 (YGAS…GQST) and 600-625 (SGSR…QRYG). Gly residues predominate over residues 626–641 (SGSGESSGFSQGGSGQ). 2 stretches are compositionally biased toward low complexity: residues 642–670 (GRSS…SRHG) and 679–713 (SGQQ…GSGS). Residue R646 is modified to Omega-N-methylarginine. Position 716 is a phosphoserine (S716). Positions 723 to 736 (GSTSGQTASSTRQG) are enriched in low complexity. A compositionally biased stretch (gly residues) spans 737–747 (SGQGQASGSGR). 4 stretches are compositionally biased toward low complexity: residues 748-764 (CGAS…GQST), 771-796 (SGSR…QRFG), 804-884 (GFSQ…SRPA), and 891-914 (SGRS…TRQG). Residue S815 is modified to Phosphoserine. A compositionally biased stretch (gly residues) spans 915–925 (SGQGQASGSGR). 2 stretches are compositionally biased toward low complexity: residues 926–942 (YGAS…GQST) and 949–974 (SGSR…QRYG). A compositionally biased stretch (gly residues) spans 975–990 (SGSGESSGFSQGGSGQ). Low complexity-rich tracts occupy residues 991–1019 (GRSS…SRHG), 1028–1062 (SGQQ…GSGS), and 1072–1085 (GSTS…TRQG). Position 995 is an omega-N-methylarginine (R995). Residues 1086–1096 (SGQGQASGSGR) show a composition bias toward gly residues. Composition is skewed to low complexity over residues 1097–1113 (CGAS…GQST), 1120–1145 (SGSR…QRFG), and 1153–1262 (GFSQ…TRQG). S1229 carries the phosphoserine modification. The segment covering 1263–1273 (SGQGQASGSGR) has biased composition (gly residues). The segment covering 1281–1292 (TSGCRSGQSTRY) has biased composition (polar residues). The segment covering 1298–1322 (GSRNSSTQSRGRSTSRESSTSQRYG) has biased composition (low complexity). Over residues 1323–1338 (SGSGESSGFSQGGSGQ) the composition is skewed to gly residues. Low complexity-rich tracts occupy residues 1339-1367 (GRSS…SRHG), 1376-1410 (SGQQ…GSGS), and 1420-1433 (GSTS…TRQG). R1343 is modified (omega-N-methylarginine). Residues 1434–1444 (SGQGQASGSGR) are compositionally biased toward gly residues. Composition is skewed to low complexity over residues 1445–1461 (CGAS…GQST), 1468–1493 (SGSR…QRFG), and 1501–1610 (GFSQ…TRQG). Residues S1551 and S1553 each carry the phosphoserine modification. Positions 1611-1621 (SGQGQASGSGR) are enriched in gly residues. Composition is skewed to low complexity over residues 1622 to 1631 (YGASSGQTSG) and 1645 to 1670 (SGSR…QRCG). S1650 carries the phosphoserine modification. Residues 1671 to 1686 (SGSGESSGFSQGGSGQ) show a composition bias toward gly residues. Low complexity-rich tracts occupy residues 1687 to 1715 (GRSS…SRHG), 1724 to 1758 (SGQQ…GSGS), and 1768 to 1781 (GSTS…TRQG). R1691 bears the Omega-N-methylarginine mark. Positions 1782–1792 (SGQGQASGSGR) are enriched in gly residues. Over residues 1800-1811 (TSGCGSDQSTRY) the composition is skewed to polar residues. Composition is skewed to low complexity over residues 1816–1841 (SGSR…QRFG) and 1849–1958 (GFSQ…TRQG). Over residues 1959–1969 (SGQGQASGSGR) the composition is skewed to gly residues. Composition is skewed to low complexity over residues 1970-1986 (YGAS…GQST) and 1993-2018 (SGSR…QRYG). Residue S2011 is modified to Phosphoserine. Positions 2019 to 2034 (SGSGESSGFSQGGSGQ) are enriched in gly residues. Low complexity-rich tracts occupy residues 2035–2063 (GRSS…SRHG) and 2072–2106 (SGQQ…GSGS). R2039 carries the post-translational modification Omega-N-methylarginine. Phosphoserine occurs at positions 2109 and 2124. Low complexity predominate over residues 2116–2129 (GSTSGQTASSTRQG). Gly residues predominate over residues 2130-2140 (SGQGQASGSGR). Low complexity-rich tracts occupy residues 2141–2157 (CGAS…GQST) and 2164–2189 (SGSR…QRYG). The span at 2190 to 2205 (SGSGESSGFSQGGSGQ) shows a compositional bias: gly residues. Composition is skewed to low complexity over residues 2206 to 2234 (GRSS…SRHG) and 2243 to 2300 (SGQQ…TRQG). An Omega-N-methylarginine modification is found at R2210. The segment covering 2301 to 2311 (SGQGQASGSGR) has biased composition (gly residues). 2 stretches are compositionally biased toward low complexity: residues 2312-2328 (YGAS…GQST) and 2335-2360 (SGSR…QRYG). S2353 bears the Phosphoserine mark. The segment covering 2361–2376 (SGSGESSGFSQGGSGQ) has biased composition (gly residues). 3 stretches are compositionally biased toward low complexity: residues 2377 to 2405 (GRSS…SRHG), 2414 to 2448 (SGQQ…GSGS), and 2458 to 2471 (GSTS…TRQG). R2381 carries the post-translational modification Omega-N-methylarginine. Positions 2472-2482 (SGQGQASGSGR) are enriched in gly residues.

The protein belongs to the S100-fused protein family. It in the N-terminal section; belongs to the S-100 family. In terms of processing, processed during the process of epidermal differentiation. Post-translationally, forms covalent cross-links mediated by transglutaminase TGM3, between glutamine and the epsilon-amino group of lysine residues (in vitro). Embryonic skin. Highest level in the adult forestomach followed by the skin. Lower levels in the tongue, esophagus. Detected in the granular and cornified layers of the mature epidermis.

Its subcellular location is the cytoplasmic granule. Component of the epidermal cornified cell envelopes. The polypeptide is Hornerin (Hrnr) (Mus musculus (Mouse)).